Here is a 585-residue protein sequence, read N- to C-terminus: uncharacterized protein (585 aa).

The interval 27-59 is disordered; sequence DDSERSVKSVSVSISDDEDSKTDVQDNMATPST.

This is an uncharacterized protein from Saccharomyces cerevisiae (strain ATCC 204508 / S288c) (Baker's yeast).